Here is a 383-residue protein sequence, read N- to C-terminus: Probable aspartate/prephenate aminotransferase (383 aa).

L-aspartate contacts are provided by G39, W125, and N175. K234 is subject to N6-(pyridoxal phosphate)lysine. R361 contributes to the L-aspartate binding site.

This sequence belongs to the class-I pyridoxal-phosphate-dependent aminotransferase family. As to quaternary structure, homodimer. Requires pyridoxal 5'-phosphate as cofactor.

It is found in the cytoplasm. The catalysed reaction is L-aspartate + 2-oxoglutarate = oxaloacetate + L-glutamate. It carries out the reaction L-arogenate + oxaloacetate = prephenate + L-aspartate. In terms of biological role, catalyzes the reversible conversion of aspartate and 2-oxoglutarate to glutamate and oxaloacetate. Can also transaminate prephenate in the presence of aspartate. This Thermus aquaticus protein is Probable aspartate/prephenate aminotransferase (aspC).